The chain runs to 276 residues: MSTNCMFNLDNDYIYCKYWKPITYPKALVFISHGAGEHSGRYDELAENISSLGILVFSHDHIGHGRSNGEKMMIDDFGKYVRDVVQHVVTIKSTYPGVPVFLLGHSMGATISILAACDNPNLFTAMILMSPLVNADAVPRLNLLAAKLMGTITPNASVGKLCPESVSRDMDEVYKYQYDPLVNHEKIKAGFASQVLKATNKVRKIIPKINTPTLILQGTNNEISDVSGAYYFMQHANCNREIKIYEGAKHHLHKETDEVKKSVMKEIETWIFNRVK.

It belongs to the orthopoxvirus OPG043 family.

The polypeptide is Monoglyceride lipase homolog (OPG043) (Cynomys gunnisoni (Gunnison's prairie dog)).